A 113-amino-acid polypeptide reads, in one-letter code: U11-theraphotoxin-Hhn1a (113 aa).

The signal sequence occupies residues 1-21; sequence MNTVRVAFLLVFVLAVSLGQA. The propeptide occupies 22–74; the sequence is DKDENRMEMQEKTEQGKSYLDFAENLLLQKLEELEAKLLEEDSEESRNSRQKR. A disordered region spans residues 61-83; the sequence is EEDSEESRNSRQKRCIGEGVPCD. 3 disulfide bridges follow: cysteine 75-cysteine 90, cysteine 82-cysteine 95, and cysteine 89-cysteine 110.

It belongs to the neurotoxin 14 (magi-1) family. 01 (HNTX-16) subfamily. In terms of tissue distribution, expressed by the venom gland.

Its subcellular location is the secreted. Its function is as follows. Probable ion channel inhibitor. The protein is U11-theraphotoxin-Hhn1a of Cyriopagopus hainanus (Chinese bird spider).